The sequence spans 156 residues: Ribosome maturation factor RimP (156 aa).

This sequence belongs to the RimP family.

The protein resides in the cytoplasm. In terms of biological role, required for maturation of 30S ribosomal subunits. The protein is Ribosome maturation factor RimP of Bacillus cytotoxicus (strain DSM 22905 / CIP 110041 / 391-98 / NVH 391-98).